The chain runs to 564 residues: MGNWVVNHWFSVLFLVVWLGLNVFLFVDAFLKYEKADKYYYTRKILGSTLACARASALCLNFNSTLILLPVCRNLLSFLRGTCSFCSRTLRKQLDHNLTFHKLVAYMICLHTAIHIIAHLFNFDCYSRSRQATDGSLASILSSLSHDEKKGGSWLNPIQSRNTTVEYVTFTSIAGLTGVIMTIALILMVTSATEFIRRSYFEVFWYTHHLFIFYILGLGIHGIGGIVRGQTEESMNESHPRKCAESFEMWDDRDSHCRRPKFEGHPPESWKWILAPVILYICERILRFYRSQQKVVITKVVMHPSKVLELQMNKRGFSMEVGQYIFVNCPSISLLEWHPFTLTSAPEEDFFSIHIRAAGDWTENLIRAFEQQYSPIPRIEVDGPFGTASEDVFQYEVAVLVGAGIGVTPFASILKSIWYKFQCADHNLKTKKIYFYWICRETGAFSWFNNLLTSLEQEMEELGKVGFLNYRLFLTGWDSNIVGHAALNFDKATDIVTGLKQKTSFGRPMWDNEFSTIATSHPKSVVGVFLCGPRTLAKSLRKCCHRYSSLDPRKVQFYFNKENF.

Residues 1 to 9 lie on the Cytoplasmic side of the membrane; it reads MGNWVVNHW. Residues 10–30 traverse the membrane as a helical segment; sequence FSVLFLVVWLGLNVFLFVDAF. The Extracellular portion of the chain corresponds to 31–44; sequence LKYEKADKYYYTRK. The chain crosses the membrane as a helical span at residues 45-72; that stretch reads ILGSTLACARASALCLNFNSTLILLPVC. A Ferric oxidoreductase domain is found at 54–283; the sequence is RASALCLNFN…LAPVILYICE (230 aa). At 73–102 the chain is on the cytoplasmic side; that stretch reads RNLLSFLRGTCSFCSRTLRKQLDHNLTFHK. Heme contacts are provided by His101 and His115. Residues 103–123 form a helical membrane-spanning segment; the sequence is LVAYMICLHTAIHIIAHLFNF. Residues 124–168 lie on the Extracellular side of the membrane; it reads DCYSRSRQATDGSLASILSSLSHDEKKGGSWLNPIQSRNTTVEYV. A glycan (N-linked (GlcNAc...) asparagine) is linked at Asn162. Residues 169–189 traverse the membrane as a helical segment; sequence TFTSIAGLTGVIMTIALILMV. The Cytoplasmic portion of the chain corresponds to 190–206; sequence TSATEFIRRSYFEVFWY. A helical transmembrane segment spans residues 207–227; that stretch reads THHLFIFYILGLGIHGIGGIV. Positions 209 and 221 each coordinate heme. At 228–396 the chain is on the extracellular side; the sequence is RGQTEESMNE…TASEDVFQYE (169 aa). Asn236 carries N-linked (GlcNAc...) asparagine glycosylation. The 108-residue stretch at 284–391 folds into the FAD-binding FR-type domain; the sequence is RILRFYRSQQ…DGPFGTASED (108 aa). 338–344 contacts FAD; it reads HPFTLTS. The helical transmembrane segment at 397-417 threads the bilayer; that stretch reads VAVLVGAGIGVTPFASILKSI. The tract at residues 397–536 is interaction with NOXO1; that stretch reads VAVLVGAGIG…GVFLCGPRTL (140 aa). The Cytoplasmic segment spans residues 418–564; the sequence is WYKFQCADHN…VQFYFNKENF (147 aa). The residue at position 430 (Thr430) is a Phosphothreonine.

In terms of assembly, NOX1, NOXA1, NOXO1, RAC1 and CYBA forms a functional multimeric complex supporting reactive oxygen species (ROS) production. Interacts with NOXO1. Interacts (via FAD-binding FR-type domain) with ARHGEF7 (via PH domain). The phosphorylated form at Thr-430 interacts with NOXA1 with greater affinity. Requires FAD as cofactor. Phosphorylation at Thr-430 mediated by PKC/PRKBC positively regulates its interaction with NOXA1 and enzyme activity. Detected in colon, uterus, prostate, and colon carcinoma, but not in peripheral blood leukocytes.

It localises to the cell projection. The protein localises to the invadopodium membrane. Its subcellular location is the cell membrane. The catalysed reaction is NADPH + 2 O2 = 2 superoxide + NADP(+) + H(+). Its activity is regulated as follows. The oxidase activity is potentiated by NOXA1, NOXO1 and RAC1. In terms of biological role, NADPH oxidase that catalyzes the generation of superoxide from molecular oxygen utilizing NADPH as an electron donor. This Homo sapiens (Human) protein is NADPH oxidase 1.